The following is a 349-amino-acid chain: Small ribosomal subunit biogenesis GTPase RsgA (349 aa).

The span at 1–11 (MSKKKLSKGQQ) shows a compositional bias: basic residues. Residues 1–35 (MSKKKLSKGQQRRVSANHQRRLKHADSKVEWDDSQ) are disordered. Residues 111-272 (YDGLKPIAAN…VIDSPGVREF (162 aa)) form the CP-type G domain. GTP-binding positions include 158–161 (NKID) and 212–220 (GQSGVGKSS). Zn(2+)-binding residues include Cys-296, Cys-301, His-303, and Cys-309.

Belongs to the TRAFAC class YlqF/YawG GTPase family. RsgA subfamily. Monomer. Associates with 30S ribosomal subunit, binds 16S rRNA. Zn(2+) is required as a cofactor.

It localises to the cytoplasm. One of several proteins that assist in the late maturation steps of the functional core of the 30S ribosomal subunit. Helps release RbfA from mature subunits. May play a role in the assembly of ribosomal proteins into the subunit. Circularly permuted GTPase that catalyzes slow GTP hydrolysis, GTPase activity is stimulated by the 30S ribosomal subunit. The polypeptide is Small ribosomal subunit biogenesis GTPase RsgA (Dickeya dadantii (strain 3937) (Erwinia chrysanthemi (strain 3937))).